Reading from the N-terminus, the 919-residue chain is Plasma membrane ATPase 1 (919 aa).

The segment covering 1 to 16 (MADNAGEYHDAEKHAP) has biased composition (basic and acidic residues). A disordered region spans residues 1 to 73 (MADNAGEYHD…APAAGEAKAV (73 aa)). The Cytoplasmic portion of the chain corresponds to 1–113 (MADNAGEYHD…KEELENPFLK (113 aa)). Over residues 34-63 (QDDEPDDDIDALIEELFSEDVQEEQEDNDD) the composition is skewed to acidic residues. Phosphoserine is present on serine 89. A helical membrane pass occupies residues 114 to 134 (FIMFFVGPIQFVMEMAAALAA). The Extracellular portion of the chain corresponds to 135 to 138 (GLRD). The helical transmembrane segment at 139–158 (WVDFGVICALLMLNAVVGFV) threads the bilayer. The Cytoplasmic portion of the chain corresponds to 159–289 (QEYQAGSIVD…GTGHFTEVLN (131 aa)). The helical transmembrane segment at 290–311 (GIGTILLVLVLLTLFCIYTAAF) threads the bilayer. At 312–322 (YRSVRLARLLE) the chain is on the extracellular side. A helical transmembrane segment spans residues 323–345 (YTLAITIIGVPVGLPAVVTTTMA). The Cytoplasmic portion of the chain corresponds to 346–717 (VGAAYLAEKQ…LIIRNQLLNL (372 aa)). The active-site 4-aspartylphosphate intermediate is aspartate 376. Serine 494 is subject to Phosphoserine. Mg(2+) contacts are provided by aspartate 632 and aspartate 636. A helical membrane pass occupies residues 718 to 736 (ELVVFIAIFADVATLAIAY). The Extracellular portion of the chain corresponds to 737 to 752 (DNAPYSMKPVKWNLPR). A helical transmembrane segment spans residues 753 to 772 (LWGLSTVIGIVLAIGTWITN). Topologically, residues 773–824 (TTMIAQGQNRGIVQNFGVQDEVLFLEISLTENWLIFVTRCNGPFWSSIPSWQ) are cytoplasmic. The chain crosses the membrane as a helical span at residues 825–845 (LSGAVLAVDILATMFCIFGWF). Residues 846-858 (KGGHQTSIVAVLR) are Extracellular-facing. The helical transmembrane segment at 859–875 (IWMYSFGIFCIMAGTYY) threads the bilayer. Over 876 to 919 (ILSESAGFDRMMNGKPKESRNQRSIEDLVVALQRTSTRHEKGDA) the chain is Cytoplasmic. Serine 899 is modified (phosphoserine).

The protein belongs to the cation transport ATPase (P-type) (TC 3.A.3) family. Type IIIA subfamily.

The protein localises to the cell membrane. It catalyses the reaction ATP + H2O + H(+)(in) = ADP + phosphate + 2 H(+)(out). Functionally, the plasma membrane ATPase of plants and fungi is a hydrogen ion pump. The proton gradient it generates drives the active transport of nutrients by H(+)-symport. The resulting external acidification and/or internal alkinization may mediate growth responses. This Schizosaccharomyces pombe (strain 972 / ATCC 24843) (Fission yeast) protein is Plasma membrane ATPase 1 (pma1).